Consider the following 44-residue polypeptide: Large ribosomal subunit protein bL34 (44 aa).

This sequence belongs to the bacterial ribosomal protein bL34 family.

In Ehrlichia ruminantium (strain Gardel), this protein is Large ribosomal subunit protein bL34.